The primary structure comprises 294 residues: MSKRPLRWLTEQITLAGMRPPISPQLLINRPAMQPVDLTGKRILLTGASSGIGAAATKQFGLHRAVVVAVARRKDLLDAVADRITGDGGTAMSLPCDLSDMEAIDALVEDVEKRIGGIDILINNAGRSIRRPLAESLERWHDVERTMVLNYYAPLRLIRGLAPGMLERGDGHIINVATWGVLSEASPLFSVYNASKAALSAVSRIIETEWGSQGVHSTTLYYPLVATPMIAPTKAYDGLPALTAAEAAEWMVTAARTRPVRIAPRVAVAVNALDSIGPRWVNALMQRRNEQLNP.

The NADP(+) site is built by serine 49, serine 50, isoleucine 52, arginine 72, aspartate 97, leucine 98, asparagine 124, tyrosine 192, lysine 196, valine 225, and threonine 227. Tyrosine 192 serves as the catalytic Proton acceptor.

This sequence belongs to the short-chain dehydrogenases/reductases (SDR) family.

It localises to the host mitochondrion. The catalysed reaction is hexadecanal + NADP(+) + CoA = hexadecanoyl-CoA + NADPH + H(+). Oxidoreductase that promotes the persistence of M.tuberculosis in host macrophages by reprogramming the fatty acid metabolism in host mitochondria. When localized in the host mitochondria, it potentially acts on unknown lipid substrates and converts them into products that directly or indirectly alter the lipid profile of the mitochondria. This change in lipid profile results in increased mitochondrial membrane fluidity, enhanced endogenous fatty acid oxidation and increased mitochondrial spare respiratory capacity. All these events eventually favor M.tuberculosis persistence in the host macrophages. In vitro, can catalyze the NADPH-dependent reduction of palmitoyl-CoA (hexadecanoyl-CoA). The chain is Fatty acyl-CoA reductase Rv0547c from Mycobacterium tuberculosis (strain ATCC 25618 / H37Rv).